Reading from the N-terminus, the 178-residue chain is Phosphopantetheine adenylyltransferase (178 aa).

Serine 8 contacts substrate. ATP-binding positions include 8–9 (SF) and histidine 16. Residues lysine 40, threonine 72, and arginine 86 each contribute to the substrate site. ATP contacts are provided by residues 87 to 89 (GLR), glutamate 97, and 122 to 128 (YSFLSSS).

The protein belongs to the bacterial CoaD family. In terms of assembly, homohexamer. Requires Mg(2+) as cofactor.

It localises to the cytoplasm. The enzyme catalyses (R)-4'-phosphopantetheine + ATP + H(+) = 3'-dephospho-CoA + diphosphate. It functions in the pathway cofactor biosynthesis; coenzyme A biosynthesis; CoA from (R)-pantothenate: step 4/5. Functionally, reversibly transfers an adenylyl group from ATP to 4'-phosphopantetheine, yielding dephospho-CoA (dPCoA) and pyrophosphate. This chain is Phosphopantetheine adenylyltransferase, found in Picosynechococcus sp. (strain ATCC 27264 / PCC 7002 / PR-6) (Agmenellum quadruplicatum).